The following is a 318-amino-acid chain: cAMP/cGMP dual specificity phosphodiesterase MT0825 (318 aa).

Residues D21, H23, and D63 each contribute to the Fe cation site. AMP-binding positions include H23, D63, and 97 to 98 (NH). Mn(2+) contacts are provided by D63, N97, H169, and H207. Residue H209 coordinates Fe cation. H209 contributes to the AMP binding site. The interval 278–318 (PGQARRKIAESGIFIEPSRRDSLFKHPPMVLTSSAPRSPVD) is C-terminal extension.

This sequence belongs to the cyclic nucleotide phosphodiesterase class-III family. In terms of assembly, homodimer. Fe(3+) serves as cofactor. It depends on Mn(2+) as a cofactor.

It is found in the cytoplasm. It localises to the cell membrane. The protein resides in the secreted. Its subcellular location is the cell wall. The protein localises to the cell envelope. It carries out the reaction a nucleoside 2',3'-cyclic phosphate + H2O = a nucleoside 3'-phosphate + H(+). The enzyme catalyses 2',3'-cyclophospho-AMP + H2O = 3'-AMP + H(+). The catalysed reaction is 2',3'-cyclophospho-GMP + H2O = 3'-GMP + H(+). It catalyses the reaction a nucleoside 3',5'-cyclic phosphate + H2O = a nucleoside 5'-phosphate + H(+). It carries out the reaction 3',5'-cyclic AMP + H2O = AMP + H(+). The enzyme catalyses 3',5'-cyclic GMP + H2O = GMP + H(+). Its function is as follows. Cyclic nucleotide phosphodiesterase with a dual-specificity for the second messengers cAMP and cGMP. This Mycobacterium tuberculosis (strain CDC 1551 / Oshkosh) protein is cAMP/cGMP dual specificity phosphodiesterase MT0825.